The primary structure comprises 317 residues: uncharacterized protein (317 aa).

The next 7 membrane-spanning stretches (helical) occupy residues 18–38 (FWLI…LVII), 58–78 (IILS…GFIF), 92–112 (FLGS…WWSF), 130–150 (LFSA…AWAV), 159–179 (LFHI…KLLP), 202–222 (CSFL…LSTV), and 252–272 (NLLN…LLIA).

This sequence belongs to the CbiQ family.

It localises to the cell membrane. This is an uncharacterized protein from Mycoplasma genitalium (strain ATCC 33530 / DSM 19775 / NCTC 10195 / G37) (Mycoplasmoides genitalium).